The following is a 407-amino-acid chain: Protein phosphatase methylesterase 1 (407 aa).

Positions 1–53 (MSDLQKSFAKSKLAKLPPEPPPIPESVADEDDDSGSSTETVTPSPVKQLFARP) are disordered. Catalysis depends on residues serine 185, aspartate 211, and histidine 342. Over residues 388–401 (GAGVPLGKAEGGTT) the composition is skewed to gly residues. Residues 388-407 (GAGVPLGKAEGGTTGSFKRS) form a disordered region.

The protein belongs to the AB hydrolase superfamily.

It catalyses the reaction [phosphatase 2A protein]-C-terminal L-leucine methyl ester + H2O = [phosphatase 2A protein]-C-terminal L-leucine + methanol + H(+). Its function is as follows. Demethylates proteins that have been reversibly carboxymethylated. Demethylates the phosphatase PP2A catalytic subunit. The protein is Protein phosphatase methylesterase 1 (ppe1) of Emericella nidulans (strain FGSC A4 / ATCC 38163 / CBS 112.46 / NRRL 194 / M139) (Aspergillus nidulans).